A 422-amino-acid polypeptide reads, in one-letter code: Metallocarboxypeptidase A (422 aa).

An N-terminal signal peptide occupies residues 1–17; the sequence is MRSVLSLALLAANVVTA. A propeptide spans 18–112 (activation peptide); the sequence is AVVSPFDYSG…FEAYSAGYAP (95 aa). The region spanning 119–419 is the Peptidase M14 domain; the sequence is SYHSYQDHIS…AGTVAMLKAV (301 aa). His-179 and Glu-182 together coordinate Zn(2+). Substrate is bound by residues 179–182, Arg-237, and 254–255; these read HARE and NR. Cys-248 and Cys-271 are disulfide-bonded. Zn(2+) is bound at residue His-309. 310-311 is a binding site for substrate; sequence SY. The Proton donor/acceptor role is filled by Glu-385.

The protein belongs to the peptidase M14 family. Zn(2+) serves as cofactor.

It is found in the secreted. Its function is as follows. Extracellular metalloprotease that contributes to pathogenicity. In Trichophyton tonsurans (Scalp ringworm fungus), this protein is Metallocarboxypeptidase A (MCPA).